The primary structure comprises 340 residues: Beta-ketoacyl-[acyl-carrier-protein] synthase III (340 aa).

Catalysis depends on residues Cys122 and His260. An ACP-binding region spans residues 261 to 265 (QANTR). Residue Asn291 is part of the active site.

The protein belongs to the thiolase-like superfamily. FabH family. Homodimer.

The protein localises to the cytoplasm. The catalysed reaction is malonyl-[ACP] + acetyl-CoA + H(+) = 3-oxobutanoyl-[ACP] + CO2 + CoA. It functions in the pathway lipid metabolism; fatty acid biosynthesis. Catalyzes the condensation reaction of fatty acid synthesis by the addition to an acyl acceptor of two carbons from malonyl-ACP. Catalyzes the first condensation reaction which initiates fatty acid synthesis and may therefore play a role in governing the total rate of fatty acid production. Possesses both acetoacetyl-ACP synthase and acetyl transacylase activities. Its substrate specificity determines the biosynthesis of branched-chain and/or straight-chain of fatty acids. This is Beta-ketoacyl-[acyl-carrier-protein] synthase III from Mycobacteroides abscessus (strain ATCC 19977 / DSM 44196 / CCUG 20993 / CIP 104536 / JCM 13569 / NCTC 13031 / TMC 1543 / L948) (Mycobacterium abscessus).